A 616-amino-acid polypeptide reads, in one-letter code: Proline--tRNA ligase (616 aa).

This sequence belongs to the class-II aminoacyl-tRNA synthetase family. ProS type 1 subfamily. Homodimer.

The protein localises to the cytoplasm. The catalysed reaction is tRNA(Pro) + L-proline + ATP = L-prolyl-tRNA(Pro) + AMP + diphosphate. Catalyzes the attachment of proline to tRNA(Pro) in a two-step reaction: proline is first activated by ATP to form Pro-AMP and then transferred to the acceptor end of tRNA(Pro). As ProRS can inadvertently accommodate and process non-cognate amino acids such as alanine and cysteine, to avoid such errors it has two additional distinct editing activities against alanine. One activity is designated as 'pretransfer' editing and involves the tRNA(Pro)-independent hydrolysis of activated Ala-AMP. The other activity is designated 'posttransfer' editing and involves deacylation of mischarged Ala-tRNA(Pro). The misacylated Cys-tRNA(Pro) is not edited by ProRS. The polypeptide is Proline--tRNA ligase (Streptococcus mutans serotype c (strain ATCC 700610 / UA159)).